A 573-amino-acid polypeptide reads, in one-letter code: Sulfite reductase [NADPH] hemoprotein beta-component (573 aa).

The [4Fe-4S] cluster site is built by cysteine 438, cysteine 444, cysteine 483, and cysteine 487. Cysteine 487 is a binding site for siroheme.

Belongs to the nitrite and sulfite reductase 4Fe-4S domain family. Alpha(8)-beta(8). The alpha component is a flavoprotein, the beta component is a hemoprotein. Requires siroheme as cofactor. It depends on [4Fe-4S] cluster as a cofactor.

It catalyses the reaction hydrogen sulfide + 3 NADP(+) + 3 H2O = sulfite + 3 NADPH + 4 H(+). It participates in sulfur metabolism; hydrogen sulfide biosynthesis; hydrogen sulfide from sulfite (NADPH route): step 1/1. Its function is as follows. Component of the sulfite reductase complex that catalyzes the 6-electron reduction of sulfite to sulfide. This is one of several activities required for the biosynthesis of L-cysteine from sulfate. This chain is Sulfite reductase [NADPH] hemoprotein beta-component, found in Shouchella clausii (strain KSM-K16) (Alkalihalobacillus clausii).